We begin with the raw amino-acid sequence, 438 residues long: UDP-N-acetylmuramoylalanine--D-glutamate ligase (438 aa).

Residue 112–118 (GSNGKST) coordinates ATP.

The protein belongs to the MurCDEF family.

Its subcellular location is the cytoplasm. It carries out the reaction UDP-N-acetyl-alpha-D-muramoyl-L-alanine + D-glutamate + ATP = UDP-N-acetyl-alpha-D-muramoyl-L-alanyl-D-glutamate + ADP + phosphate + H(+). It functions in the pathway cell wall biogenesis; peptidoglycan biosynthesis. Its function is as follows. Cell wall formation. Catalyzes the addition of glutamate to the nucleotide precursor UDP-N-acetylmuramoyl-L-alanine (UMA). This is UDP-N-acetylmuramoylalanine--D-glutamate ligase from Shigella dysenteriae serotype 1 (strain Sd197).